Reading from the N-terminus, the 156-residue chain is Transcription antitermination protein NusB (156 aa).

This sequence belongs to the NusB family.

In terms of biological role, involved in transcription antitermination. Required for transcription of ribosomal RNA (rRNA) genes. Binds specifically to the boxA antiterminator sequence of the ribosomal RNA (rrn) operons. This chain is Transcription antitermination protein NusB, found in Mycobacterium tuberculosis (strain CDC 1551 / Oshkosh).